Reading from the N-terminus, the 464-residue chain is Soluble pyridine nucleotide transhydrogenase (464 aa).

35-44 (DDRRQVGGNC) lines the FAD pocket.

Belongs to the class-I pyridine nucleotide-disulfide oxidoreductase family. It depends on FAD as a cofactor.

The protein localises to the cytoplasm. It carries out the reaction NAD(+) + NADPH = NADH + NADP(+). In terms of biological role, conversion of NADPH, generated by peripheral catabolic pathways, to NADH, which can enter the respiratory chain for energy generation. The polypeptide is Soluble pyridine nucleotide transhydrogenase (Pseudomonas putida (strain ATCC 47054 / DSM 6125 / CFBP 8728 / NCIMB 11950 / KT2440)).